Here is a 135-residue protein sequence, read N- to C-terminus: DNA-directed RNA polymerase subunit omega (135 aa).

Positions 107-135 (ASQESQDYEVDGEIDDEINDQDGDEEVSV) are disordered. The span at 112-135 (QDYEVDGEIDDEINDQDGDEEVSV) shows a compositional bias: acidic residues.

The protein belongs to the RNA polymerase subunit omega family. In terms of assembly, the RNAP catalytic core consists of 2 alpha, 1 beta, 1 beta' and 1 omega subunit. When a sigma factor is associated with the core the holoenzyme is formed, which can initiate transcription.

It catalyses the reaction RNA(n) + a ribonucleoside 5'-triphosphate = RNA(n+1) + diphosphate. Its function is as follows. Promotes RNA polymerase assembly. Latches the N- and C-terminal regions of the beta' subunit thereby facilitating its interaction with the beta and alpha subunits. This Wolbachia pipientis wMel protein is DNA-directed RNA polymerase subunit omega.